Reading from the N-terminus, the 150-residue chain is 3-dehydroquinate dehydratase (150 aa).

Catalysis depends on Tyr-25, which acts as the Proton acceptor. Substrate-binding residues include Asn-76, His-82, and Asp-89. Catalysis depends on His-102, which acts as the Proton donor. Substrate is bound by residues 103–104 (LS) and Arg-113.

It belongs to the type-II 3-dehydroquinase family. In terms of assembly, homododecamer.

The catalysed reaction is 3-dehydroquinate = 3-dehydroshikimate + H2O. It functions in the pathway metabolic intermediate biosynthesis; chorismate biosynthesis; chorismate from D-erythrose 4-phosphate and phosphoenolpyruvate: step 3/7. In terms of biological role, catalyzes a trans-dehydration via an enolate intermediate. This Trichodesmium erythraeum (strain IMS101) protein is 3-dehydroquinate dehydratase.